The following is a 318-amino-acid chain: Protease HtpX homolog (318 aa).

2 helical membrane passes run 6–26 (TAML…LIGG) and 28–48 (GGMM…YWNS). Zn(2+) is bound at residue histidine 130. Residue glutamate 131 is part of the active site. Zn(2+) is bound at residue histidine 134. The next 2 membrane-spanning stretches (helical) occupy residues 145–165 (ITAT…FFGG) and 173–193 (PLGF…AMLV). Glutamate 202 is a Zn(2+) binding site. A disordered region spans residues 284–318 (NVSTGPVRAVNPTRKSRSVPNTGRGGSQPPRGPWS).

Belongs to the peptidase M48B family. The cofactor is Zn(2+).

The protein resides in the cell inner membrane. The sequence is that of Protease HtpX homolog from Rhizobium etli (strain ATCC 51251 / DSM 11541 / JCM 21823 / NBRC 15573 / CFN 42).